The primary structure comprises 269 residues: Embryonic polyadenylate-binding protein 2 (269 aa).

The tract at residues glutamate 26–asparagine 54 is disordered. In terms of domain architecture, RRM spans arginine 139 to threonine 216. Residues leucine 240–tyrosine 269 form a disordered region. Over residues arginine 246–glycine 260 the composition is skewed to basic residues.

The protein resides in the cytoplasm. Binds the poly(A) tail of mRNA. The chain is Embryonic polyadenylate-binding protein 2 (Pabpn1l) from Rattus norvegicus (Rat).